The following is a 538-amino-acid chain: Adenine deaminase (538 aa).

This sequence belongs to the metallo-dependent hydrolases superfamily. Adenine deaminase family. Mn(2+) serves as cofactor.

It catalyses the reaction adenine + H2O + H(+) = hypoxanthine + NH4(+). In Methanothermobacter thermautotrophicus (strain ATCC 29096 / DSM 1053 / JCM 10044 / NBRC 100330 / Delta H) (Methanobacterium thermoautotrophicum), this protein is Adenine deaminase.